The chain runs to 283 residues: NAD kinase (283 aa).

The Proton acceptor role is filled by Asp65. NAD(+) is bound by residues 65 to 66 (DG), 139 to 140 (ND), Arg150, Arg167, Asp169, 180 to 185 (TGYSVS), and Gln239.

Belongs to the NAD kinase family. Requires a divalent metal cation as cofactor.

It localises to the cytoplasm. The enzyme catalyses NAD(+) + ATP = ADP + NADP(+) + H(+). In terms of biological role, involved in the regulation of the intracellular balance of NAD and NADP, and is a key enzyme in the biosynthesis of NADP. Catalyzes specifically the phosphorylation on 2'-hydroxyl of the adenosine moiety of NAD to yield NADP. In Nitratidesulfovibrio vulgaris (strain DSM 19637 / Miyazaki F) (Desulfovibrio vulgaris), this protein is NAD kinase.